The sequence spans 790 residues: Protein SEY1 (790 aa).

The Cytoplasmic segment spans residues 1–692; it reads MELSEGELSH…KRSIVQHITQ (692 aa). The region spanning 55 to 284 is the GB1/RHD3-type G domain; it reads GNNYHIISVF…VSNELFKPEY (230 aa). 65–72 provides a ligand contact to GTP; it reads GSQSTGKS. A helical transmembrane segment spans residues 693-713; sequence IPYYIYLIILVLGWNEFMAII. Residues 714-716 are Lumenal-facing; the sequence is RNP. Residues 717–737 traverse the membrane as a helical segment; the sequence is LFFSLSIVLGATVYVLYYLGL. Residues 738–790 are Cytoplasmic-facing; that stretch reads LRPALVVAQRTMDEVIVMAKTKLREVLIDDHEVTGRQLNKMAGSKENIELDDM.

The protein belongs to the TRAFAC class dynamin-like GTPase superfamily. GB1/RHD3 GTPase family. RHD3 subfamily.

Its subcellular location is the endoplasmic reticulum membrane. In terms of biological role, cooperates with the reticulon proteins and tubule-shaping DP1 family proteins to generate and maintain the structure of the tubular endoplasmic reticulum network. Has GTPase activity, which is required for its function in ER organization. In Candida albicans (strain WO-1) (Yeast), this protein is Protein SEY1.